We begin with the raw amino-acid sequence, 189 residues long: Penicillin-binding protein activator LpoB (189 aa).

Residues 1-16 form the signal peptide; that stretch reads MRRILFVALSVMFLAG. A lipid anchor (N-palmitoyl cysteine) is attached at Cys17. Cys17 carries S-diacylglycerol cysteine lipidation. Residues 18–52 form a disordered region; the sequence is PSLPPEQPEPPTPVVPVTPSEKPTPPSEKVPEPPK. The segment covering 19–45 has biased composition (pro residues); that stretch reads SLPPEQPEPPTPVVPVTPSEKPTPPSE.

This sequence belongs to the LpoB family. As to quaternary structure, interacts with PBP1b.

The protein localises to the cell outer membrane. Its function is as follows. Regulator of peptidoglycan synthesis that is essential for the function of penicillin-binding protein 1B (PBP1b). The chain is Penicillin-binding protein activator LpoB from Photorhabdus laumondii subsp. laumondii (strain DSM 15139 / CIP 105565 / TT01) (Photorhabdus luminescens subsp. laumondii).